The chain runs to 535 residues: MESLMRLVLVLFPFFVVFFVPLDHVSSESISRANFPDGFVFGTASSAYQFEGAVKEGNKGESIWDTFTKEKPGKILDFSNADTTVDQYHRFHNDIDLMKDLRMDAYRFSISWSRIFPNGTGEVNPDGVKYYNSLIDALLAKGIKPYVTLYHWDLPQALEDRYEGWLSREVVDDFEHYAFTCFKAFGDRVKYWITFNEPHGVSIQGYDTGIQAPGRCSLLGHWFCKKGKSSVEPYIVAHNILLSHAAAYHTYQRNFKEKQRGQIGISLDAKWYEPMSDCDEDKDAARRAMDFGLGWFMDPLINGDYPASMKSLVEERLPKITPEMYKTIKGAFDYVGINHYTTLYARNDRTRIRKLILQDASSDSAVITSSFRGGVAIGERAGSSWLHIVPWGIRKLAVYVKDIYGNPPVFITENGMDEKNSPFIDMEKALKDDKRIGFHRDYLSNLSAAIRNDECDVRGYFVWSLLDNWEWNSGYTVRFGIYYVDYKNNLTRIPKASARWFQTILSGSSSTSDSSKLILLEEATEQQQEYKFQEK.

A signal peptide spans 1–27; the sequence is MESLMRLVLVLFPFFVVFFVPLDHVSS. Q49 lines the a beta-D-glucoside pocket. The N-linked (GlcNAc...) asparagine glycan is linked to N118. A beta-D-glucoside is bound by residues H151 and 196–197; that span reads NE. E197 acts as the Proton donor in catalysis. Residues C216 and C224 are joined by a disulfide bond. The a beta-D-glucoside site is built by Y340 and E413. The Nucleophile role is filled by E413. N445 carries an N-linked (GlcNAc...) asparagine glycan. A beta-D-glucoside-binding positions include W463, 470-471, and F479; that span reads EW. The N-linked (GlcNAc...) asparagine glycan is linked to N489.

The protein belongs to the glycosyl hydrolase 1 family.

The catalysed reaction is Hydrolysis of terminal, non-reducing beta-D-glucosyl residues with release of beta-D-glucose.. The protein is Putative beta-glucosidase 41 of Arabidopsis thaliana (Mouse-ear cress).